We begin with the raw amino-acid sequence, 549 residues long: Glucose-6-phosphate isomerase (549 aa).

Catalysis depends on Glu353, which acts as the Proton donor. Catalysis depends on residues His384 and Lys510.

Belongs to the GPI family.

It localises to the cytoplasm. It carries out the reaction alpha-D-glucose 6-phosphate = beta-D-fructose 6-phosphate. The protein operates within carbohydrate biosynthesis; gluconeogenesis. It participates in carbohydrate degradation; glycolysis; D-glyceraldehyde 3-phosphate and glycerone phosphate from D-glucose: step 2/4. Catalyzes the reversible isomerization of glucose-6-phosphate to fructose-6-phosphate. This is Glucose-6-phosphate isomerase from Mycolicibacterium smegmatis (strain ATCC 700084 / mc(2)155) (Mycobacterium smegmatis).